An 83-amino-acid chain; its full sequence is Protein MATERNALLY EXPRESSED GENE 3 (83 aa).

Residues 1–22 (MQWLAFVAPRWRCVCDQELSAQ) form the signal peptide. A disulfide bond links Cys60 and Cys82.

The protein belongs to the MEG family. In terms of tissue distribution, expressed in endosperm, anther and pollen.

In Zea mays (Maize), this protein is Protein MATERNALLY EXPRESSED GENE 3 (MEG3).